The chain runs to 192 residues: MLITISGPAGSGKSTVAAGLAESLGYEHVSGGDIFRDLADDRGLTPLELNKRAEEDDQIDRDLDRKQRDIAESRDDIVLESRLAGWMAGEHADFRIWLDAPLSVRAERIADREDKSVELAHNETKERGKSEALRYREYYNIDIEDRSIYDLALNTARLSPDGVRAVVESAVNAYAPDDDEGQTPVEGVTYEF.

Residue 7–15 (GPAGSGKST) participates in ATP binding.

Belongs to the cytidylate kinase family. Type 2 subfamily.

Its subcellular location is the cytoplasm. It catalyses the reaction CMP + ATP = CDP + ADP. The catalysed reaction is dCMP + ATP = dCDP + ADP. The sequence is that of Cytidylate kinase from Natronomonas pharaonis (strain ATCC 35678 / DSM 2160 / CIP 103997 / JCM 8858 / NBRC 14720 / NCIMB 2260 / Gabara) (Halobacterium pharaonis).